Here is a 165-residue protein sequence, read N- to C-terminus: Nucleotide-binding protein LBF_1338 (165 aa).

This sequence belongs to the YajQ family.

In terms of biological role, nucleotide-binding protein. This Leptospira biflexa serovar Patoc (strain Patoc 1 / Ames) protein is Nucleotide-binding protein LBF_1338.